We begin with the raw amino-acid sequence, 348 residues long: 4-hydroxy-2-oxovalerate aldolase 2 (348 aa).

The 252-residue stretch at 5-256 folds into the Pyruvate carboxyltransferase domain; sequence LQICDSTLRD…EARIKLFDAL (252 aa). 13 to 14 is a binding site for substrate; that stretch reads RD. D14 lines the Mn(2+) pocket. Catalysis depends on H17, which acts as the Proton acceptor. The substrate site is built by S168 and H195. H195 and H197 together coordinate Mn(2+).

The protein belongs to the 4-hydroxy-2-oxovalerate aldolase family.

The catalysed reaction is (S)-4-hydroxy-2-oxopentanoate = acetaldehyde + pyruvate. The polypeptide is 4-hydroxy-2-oxovalerate aldolase 2 (Salinispora arenicola (strain CNS-205)).